Consider the following 761-residue polypeptide: Neutral ceramidase (761 aa).

The Cytoplasmic portion of the chain corresponds to 1 to 11 (MAKRTFSSLEA). The chain crosses the membrane as a helical; Signal-anchor for type II membrane protein span at residues 12 to 32 (FLIFLLVMMTAITVALLTLLF). Residues 33–761 (VTSGTIENHK…ISSPFEIVTT (729 aa)) are Lumenal-facing. The interval 43–76 (DSGNHWVSTTQGPTTTQSSPTTQTPTTQTPDLPP) is disordered. The span at 50–76 (STTQGPTTTQSSPTTQTPTTQTPDLPP) shows a compositional bias: low complexity. Threonine 51, threonine 52, threonine 56, threonine 57, and threonine 58 each carry an O-linked (GalNAc...) threonine glycan. Residues serine 60 and serine 61 are each glycosylated (O-linked (GalNAc...) serine). O-linked (GalNAc...) threonine glycans are attached at residues threonine 63, threonine 64, threonine 66, threonine 68, threonine 69, and threonine 71. Leucine 115 contributes to the Ca(2+) binding site. Histidine 175 contacts Zn(2+). Asparagine 198 is a glycosylation site (N-linked (GlcNAc...) asparagine). Histidine 284 is a Zn(2+) binding site. The Nucleophile role is filled by serine 335. 2 disulfide bridges follow: cysteine 343/cysteine 357 and cysteine 350/cysteine 365. N-linked (GlcNAc...) asparagine glycans are attached at residues asparagine 412 and asparagine 449. A disulfide bond links cysteine 429 and cysteine 479. 2 residues coordinate Zn(2+): glutamate 521 and tyrosine 560. Residues aspartate 693, serine 695, and threonine 698 each contribute to the Ca(2+) site. The required for correct folding and localization stretch occupies residues 751–761 (GISSPFEIVTT).

Belongs to the neutral ceramidase family. Zn(2+) serves as cofactor. Post-translationally, proteolytic cleavage of the N-terminus removes the signal-anchor and produces a soluble form of the protein. N-glycosylated. Required for enzyme activity. In terms of processing, O-glycosylated. Required to retain it as a type II membrane protein at the cell surface. Post-translationally, phosphorylated. May prevent ubiquitination and subsequent degradation. Ubiquitinated, leading to its degradation by the proteasome. Ubiquitination is triggered by nitric oxide. In terms of tissue distribution, highly expressed in brain, kidney and heart. Expressed at lower level in other tissues such as liver. Expressed in intestine, kidney and liver (at protein level). Localizes in the epithelia of the jejunum and ileum.

Its subcellular location is the cell membrane. The protein resides in the membrane raft. It localises to the membrane. The protein localises to the caveola. It is found in the golgi apparatus membrane. Its subcellular location is the mitochondrion. The protein resides in the secreted. It localises to the extracellular exosome. It catalyses the reaction an N-acylsphing-4-enine + H2O = sphing-4-enine + a fatty acid. The enzyme catalyses N-hexadecanoylsphing-4-enine + H2O = sphing-4-enine + hexadecanoate. It carries out the reaction N-tetradecanoylsphing-4-enine + H2O = tetradecanoate + sphing-4-enine. The catalysed reaction is N-(9Z-octadecenoyl)-sphing-4-enine + H2O = sphing-4-enine + (9Z)-octadecenoate. It catalyses the reaction N-(15Z-tetracosenoyl)-sphing-4-enine + H2O = (15Z)-tetracosenoate + sphing-4-enine. The enzyme catalyses N-octanoylsphing-4-enine + H2O = octanoate + sphing-4-enine. It carries out the reaction N-dodecanoylsphing-4-enine + H2O = dodecanoate + sphing-4-enine. The catalysed reaction is N-(hexanoyl)sphing-4-enine + H2O = hexanoate + sphing-4-enine. It catalyses the reaction N-octadecanoylsphing-4-enine + H2O = sphing-4-enine + octadecanoate. The enzyme catalyses sphinganine + hexadecanoate = N-hexadecanoylsphinganine + H2O. It carries out the reaction N-(octadecanoyl)-sphinganine + H2O = sphinganine + octadecanoate. It participates in lipid metabolism; sphingolipid metabolism. The reverse reaction is inhibited by Zn(2+) and Cu(2+). Inhibited by cardiolipin and phosphatidic acid. Plasma membrane ceramidase that hydrolyzes sphingolipid ceramides into sphingosine and free fatty acids at neutral pH. Ceramides, sphingosine, and its phosphorylated form sphingosine-1-phosphate are bioactive lipids that mediate cellular signaling pathways regulating several biological processes including cell proliferation, apoptosis and differentiation. Also catalyzes the reverse reaction allowing the synthesis of ceramides from fatty acids and sphingosine. Together with sphingomyelinase, participates in the production of sphingosine and sphingosine-1-phosphate from the degradation of sphingomyelin, a sphingolipid enriched in the plasma membrane of cells. Also participates in the hydrolysis of ceramides from the extracellular milieu allowing the production of sphingosine-1-phosphate inside and outside cells. This is the case for instance with the digestion of dietary sphingolipids in the intestinal tract. The sequence is that of Neutral ceramidase (Asah2) from Rattus norvegicus (Rat).